A 160-amino-acid chain; its full sequence is MTKKKAHKPGSATIALNKRARHEYFIEEEFEAGLALQGWEVKSLRAGKANIGDSYVILKDGEAWLFGANFTPMAVASTHVVCDPTRTRKLLLNQRELDSLYGRINREGYTVVALSLYWKNAWCKVKIGVAKGKKQHDKRSDLKEREWQLDKARIMKNAGR.

Belongs to the SmpB family.

It localises to the cytoplasm. Required for rescue of stalled ribosomes mediated by trans-translation. Binds to transfer-messenger RNA (tmRNA), required for stable association of tmRNA with ribosomes. tmRNA and SmpB together mimic tRNA shape, replacing the anticodon stem-loop with SmpB. tmRNA is encoded by the ssrA gene; the 2 termini fold to resemble tRNA(Ala) and it encodes a 'tag peptide', a short internal open reading frame. During trans-translation Ala-aminoacylated tmRNA acts like a tRNA, entering the A-site of stalled ribosomes, displacing the stalled mRNA. The ribosome then switches to translate the ORF on the tmRNA; the nascent peptide is terminated with the 'tag peptide' encoded by the tmRNA and targeted for degradation. The ribosome is freed to recommence translation, which seems to be the essential function of trans-translation. This chain is SsrA-binding protein, found in Salmonella agona (strain SL483).